Here is a 224-residue protein sequence, read N- to C-terminus: Cytidylate kinase (224 aa).

Residue 9–17 (GPSGSGKGT) coordinates ATP.

It belongs to the cytidylate kinase family. Type 1 subfamily.

It is found in the cytoplasm. The enzyme catalyses CMP + ATP = CDP + ADP. The catalysed reaction is dCMP + ATP = dCDP + ADP. The chain is Cytidylate kinase from Saccharophagus degradans (strain 2-40 / ATCC 43961 / DSM 17024).